We begin with the raw amino-acid sequence, 235 residues long: Exosome complex component Rrp4 (235 aa).

The region spanning 63 to 137 (GDLVIGYVTD…DEYPIILTLK (75 aa)) is the S1 motif domain. In terms of domain architecture, KH spans 147 to 203 (GTVVEITPVKVPRVIGKRGSMLNTLMELGCDIVVGQNGRIWVKCKDPRDEVFLASLI).

This sequence belongs to the RRP4 family. In terms of assembly, component of the archaeal exosome complex. Forms a trimer of Rrp4 and/or Csl4 subunits. The trimer associates with a hexameric ring-like arrangement composed of 3 Rrp41-Rrp42 heterodimers.

It localises to the cytoplasm. Functionally, non-catalytic component of the exosome, which is a complex involved in RNA degradation. Increases the RNA binding and the efficiency of RNA degradation. Confers strong poly(A) specificity to the exosome. The polypeptide is Exosome complex component Rrp4 (Pyrobaculum aerophilum (strain ATCC 51768 / DSM 7523 / JCM 9630 / CIP 104966 / NBRC 100827 / IM2)).